We begin with the raw amino-acid sequence, 1330 residues long: Protein PUTATIVE RECOMBINATION INITIATION DEFECT 1 (1330 aa).

The tract at residues 1310-1330 (REGRVSPIQEETRQMQTERIV) is disordered.

Interacts with SPO11-1. According to PubMed:28855712, may interact with SPO11-2; this is in contradiction with PubMed:9461215 which claims that it seems to not interact with SPO11-2. Binds to DFO, PRD3 and MTOPVIB. Facilitates an interaction between PRD3 and DFO. As to expression, expressed in flower buds.

The protein localises to the nucleus. Involved in DNA cleavage that forms the double-strand breaks (DSB) that initiate meiotic recombination. The chain is Protein PUTATIVE RECOMBINATION INITIATION DEFECT 1 from Arabidopsis thaliana (Mouse-ear cress).